We begin with the raw amino-acid sequence, 255 residues long: Thiazole synthase (255 aa).

The Schiff-base intermediate with DXP role is filled by Lys95. 1-deoxy-D-xylulose 5-phosphate is bound by residues Gly156, 182–183 (AG), and 204–205 (NT).

Belongs to the ThiG family. As to quaternary structure, homotetramer. Forms heterodimers with either ThiH or ThiS.

The protein localises to the cytoplasm. The catalysed reaction is [ThiS sulfur-carrier protein]-C-terminal-Gly-aminoethanethioate + 2-iminoacetate + 1-deoxy-D-xylulose 5-phosphate = [ThiS sulfur-carrier protein]-C-terminal Gly-Gly + 2-[(2R,5Z)-2-carboxy-4-methylthiazol-5(2H)-ylidene]ethyl phosphate + 2 H2O + H(+). It functions in the pathway cofactor biosynthesis; thiamine diphosphate biosynthesis. Functionally, catalyzes the rearrangement of 1-deoxy-D-xylulose 5-phosphate (DXP) to produce the thiazole phosphate moiety of thiamine. Sulfur is provided by the thiocarboxylate moiety of the carrier protein ThiS. In vitro, sulfur can be provided by H(2)S. The chain is Thiazole synthase from Aeromonas salmonicida (strain A449).